The primary structure comprises 166 residues: FMN reductase (NADH) RutF (166 aa).

The protein belongs to the non-flavoprotein flavin reductase family. RutF subfamily.

It carries out the reaction FMNH2 + NAD(+) = FMN + NADH + 2 H(+). Catalyzes the reduction of FMN to FMNH2 which is used to reduce pyrimidine by RutA via the Rut pathway. The chain is FMN reductase (NADH) RutF from Cronobacter turicensis (strain DSM 18703 / CCUG 55852 / LMG 23827 / z3032).